Consider the following 207-residue polypeptide: Large ribosomal subunit protein uL4 (207 aa).

The segment at 54–76 (RSAVRGGGRKPWRQKGTGRARQG) is disordered. Basic residues predominate over residues 60–71 (GGRKPWRQKGTG).

This sequence belongs to the universal ribosomal protein uL4 family. In terms of assembly, part of the 50S ribosomal subunit.

Functionally, one of the primary rRNA binding proteins, this protein initially binds near the 5'-end of the 23S rRNA. It is important during the early stages of 50S assembly. It makes multiple contacts with different domains of the 23S rRNA in the assembled 50S subunit and ribosome. In terms of biological role, forms part of the polypeptide exit tunnel. This Staphylococcus haemolyticus (strain JCSC1435) protein is Large ribosomal subunit protein uL4.